We begin with the raw amino-acid sequence, 273 residues long: Ribosomal RNA small subunit methyltransferase A (273 aa).

The S-adenosyl-L-methionine site is built by asparagine 18, leucine 20, glycine 45, glutamate 66, aspartate 91, and asparagine 113.

The protein belongs to the class I-like SAM-binding methyltransferase superfamily. rRNA adenine N(6)-methyltransferase family. RsmA subfamily.

It is found in the cytoplasm. The catalysed reaction is adenosine(1518)/adenosine(1519) in 16S rRNA + 4 S-adenosyl-L-methionine = N(6)-dimethyladenosine(1518)/N(6)-dimethyladenosine(1519) in 16S rRNA + 4 S-adenosyl-L-homocysteine + 4 H(+). Its function is as follows. Specifically dimethylates two adjacent adenosines (A1518 and A1519) in the loop of a conserved hairpin near the 3'-end of 16S rRNA in the 30S particle. May play a critical role in biogenesis of 30S subunits. This chain is Ribosomal RNA small subunit methyltransferase A, found in Erwinia tasmaniensis (strain DSM 17950 / CFBP 7177 / CIP 109463 / NCPPB 4357 / Et1/99).